The primary structure comprises 368 residues: Chorismate synthase (368 aa).

2 residues coordinate NADP(+): arginine 48 and arginine 54. Residues 125–127, 238–239, glycine 278, 293–297, and arginine 319 contribute to the FMN site; these read RSS, NA, and KPTSS.

The protein belongs to the chorismate synthase family. As to quaternary structure, homotetramer. Requires FMNH2 as cofactor.

The enzyme catalyses 5-O-(1-carboxyvinyl)-3-phosphoshikimate = chorismate + phosphate. It participates in metabolic intermediate biosynthesis; chorismate biosynthesis; chorismate from D-erythrose 4-phosphate and phosphoenolpyruvate: step 7/7. Functionally, catalyzes the anti-1,4-elimination of the C-3 phosphate and the C-6 proR hydrogen from 5-enolpyruvylshikimate-3-phosphate (EPSP) to yield chorismate, which is the branch point compound that serves as the starting substrate for the three terminal pathways of aromatic amino acid biosynthesis. This reaction introduces a second double bond into the aromatic ring system. The polypeptide is Chorismate synthase (Methylibium petroleiphilum (strain ATCC BAA-1232 / LMG 22953 / PM1)).